The sequence spans 423 residues: Tyrosine--tRNA ligase (423 aa).

L-tyrosine is bound at residue Y35. A 'HIGH' region motif is present at residues 40-49; sequence PTAPSLHAGH. L-tyrosine contacts are provided by Y170 and Q174. The 'KMSKS' region motif lies at 230–234; that stretch reads KFGKS. K233 contacts ATP. Positions 355 to 412 constitute an S4 RNA-binding domain; that stretch reads DLITDLLVATGLSASKGAARRTIAEGGVSVNNMKIDSDEWTPQASDFLHGRWLVLRRG.

Belongs to the class-I aminoacyl-tRNA synthetase family. TyrS type 1 subfamily. In terms of assembly, homodimer.

Its subcellular location is the cytoplasm. It catalyses the reaction tRNA(Tyr) + L-tyrosine + ATP = L-tyrosyl-tRNA(Tyr) + AMP + diphosphate + H(+). In terms of biological role, catalyzes the attachment of tyrosine to tRNA(Tyr) in a two-step reaction: tyrosine is first activated by ATP to form Tyr-AMP and then transferred to the acceptor end of tRNA(Tyr). The sequence is that of Tyrosine--tRNA ligase from Mycobacterium sp. (strain KMS).